The sequence spans 1385 residues: DNA-directed RNA polymerase subunit beta (1385 aa).

The protein belongs to the RNA polymerase beta chain family. In terms of assembly, the RNAP catalytic core consists of 2 alpha, 1 beta, 1 beta' and 1 omega subunit. When a sigma factor is associated with the core the holoenzyme is formed, which can initiate transcription.

The catalysed reaction is RNA(n) + a ribonucleoside 5'-triphosphate = RNA(n+1) + diphosphate. Its function is as follows. DNA-dependent RNA polymerase catalyzes the transcription of DNA into RNA using the four ribonucleoside triphosphates as substrates. This Sulfurovum sp. (strain NBC37-1) protein is DNA-directed RNA polymerase subunit beta.